A 475-amino-acid chain; its full sequence is Ribulose bisphosphate carboxylase large chain (475 aa).

Positions 1–2 (MS) are excised as a propeptide. Proline 3 carries the post-translational modification N-acetylproline. The residue at position 14 (lysine 14) is an N6,N6,N6-trimethyllysine. The substrate site is built by asparagine 123 and threonine 173. The Proton acceptor role is filled by lysine 175. Position 177 (lysine 177) interacts with substrate. Mg(2+) contacts are provided by lysine 201, aspartate 203, and glutamate 204. Lysine 201 is modified (N6-carboxylysine). Catalysis depends on histidine 294, which acts as the Proton acceptor. Residues arginine 295, histidine 327, and serine 379 each contribute to the substrate site.

Belongs to the RuBisCO large chain family. Type I subfamily. In terms of assembly, heterohexadecamer of 8 large chains and 8 small chains; disulfide-linked. The disulfide link is formed within the large subunit homodimers. It depends on Mg(2+) as a cofactor. In terms of processing, the disulfide bond which can form in the large chain dimeric partners within the hexadecamer appears to be associated with oxidative stress and protein turnover.

It is found in the plastid. The protein resides in the chloroplast. It catalyses the reaction 2 (2R)-3-phosphoglycerate + 2 H(+) = D-ribulose 1,5-bisphosphate + CO2 + H2O. The enzyme catalyses D-ribulose 1,5-bisphosphate + O2 = 2-phosphoglycolate + (2R)-3-phosphoglycerate + 2 H(+). RuBisCO catalyzes two reactions: the carboxylation of D-ribulose 1,5-bisphosphate, the primary event in carbon dioxide fixation, as well as the oxidative fragmentation of the pentose substrate in the photorespiration process. Both reactions occur simultaneously and in competition at the same active site. This chain is Ribulose bisphosphate carboxylase large chain, found in Carica papaya (Papaya).